We begin with the raw amino-acid sequence, 226 residues long: Thiamine-phosphate synthase (226 aa).

Residues 46-50 (QFRDK) and D83 each bind 4-amino-2-methyl-5-(diphosphooxymethyl)pyrimidine. Positions 84 and 103 each coordinate Mg(2+). S122 provides a ligand contact to 4-amino-2-methyl-5-(diphosphooxymethyl)pyrimidine. Residue 149–151 (TQS) coordinates 2-[(2R,5Z)-2-carboxy-4-methylthiazol-5(2H)-ylidene]ethyl phosphate. K152 contacts 4-amino-2-methyl-5-(diphosphooxymethyl)pyrimidine. 2-[(2R,5Z)-2-carboxy-4-methylthiazol-5(2H)-ylidene]ethyl phosphate contacts are provided by residues G181 and 201-202 (IT).

It belongs to the thiamine-phosphate synthase family. The cofactor is Mg(2+).

The enzyme catalyses 2-[(2R,5Z)-2-carboxy-4-methylthiazol-5(2H)-ylidene]ethyl phosphate + 4-amino-2-methyl-5-(diphosphooxymethyl)pyrimidine + 2 H(+) = thiamine phosphate + CO2 + diphosphate. It carries out the reaction 2-(2-carboxy-4-methylthiazol-5-yl)ethyl phosphate + 4-amino-2-methyl-5-(diphosphooxymethyl)pyrimidine + 2 H(+) = thiamine phosphate + CO2 + diphosphate. The catalysed reaction is 4-methyl-5-(2-phosphooxyethyl)-thiazole + 4-amino-2-methyl-5-(diphosphooxymethyl)pyrimidine + H(+) = thiamine phosphate + diphosphate. It functions in the pathway cofactor biosynthesis; thiamine diphosphate biosynthesis; thiamine phosphate from 4-amino-2-methyl-5-diphosphomethylpyrimidine and 4-methyl-5-(2-phosphoethyl)-thiazole: step 1/1. Functionally, condenses 4-methyl-5-(beta-hydroxyethyl)thiazole monophosphate (THZ-P) and 2-methyl-4-amino-5-hydroxymethyl pyrimidine pyrophosphate (HMP-PP) to form thiamine monophosphate (TMP). The chain is Thiamine-phosphate synthase from Haemophilus influenzae (strain PittGG).